A 331-amino-acid polypeptide reads, in one-letter code: UPF0194 membrane protein YbhG (331 aa).

The signal sequence occupies residues 1-15 (MKKPVVIGLAVVVLA). Residues 107–208 (EEIAQAAAAV…LNLQDSTLIA (102 aa)) are a coiled coil.

It belongs to the UPF0194 family.

The protein resides in the periplasm. The sequence is that of UPF0194 membrane protein YbhG from Escherichia coli O157:H7 (strain EC4115 / EHEC).